The sequence spans 372 residues: Chorismate synthase (372 aa).

Arginine 48 contributes to the NADP(+) binding site. Residues 125-127 (RSS), glycine 285, 300-304 (KPTPS), and arginine 327 each bind FMN.

This sequence belongs to the chorismate synthase family. The cofactor is FMNH2.

It carries out the reaction 5-O-(1-carboxyvinyl)-3-phosphoshikimate = chorismate + phosphate. It participates in metabolic intermediate biosynthesis; chorismate biosynthesis; chorismate from D-erythrose 4-phosphate and phosphoenolpyruvate: step 7/7. Its function is as follows. Catalyzes the anti-1,4-elimination of the C-3 phosphate and the C-6 proR hydrogen from 5-enolpyruvylshikimate-3-phosphate (EPSP) to yield chorismate, which is the branch point compound that serves as the starting substrate for the three terminal pathways of aromatic amino acid biosynthesis. This reaction introduces a second double bond into the aromatic ring system. The sequence is that of Chorismate synthase from Methanocella arvoryzae (strain DSM 22066 / NBRC 105507 / MRE50).